We begin with the raw amino-acid sequence, 520 residues long: Amine oxidase [flavin-containing] B (520 aa).

Ser2 is subject to N-acetylserine. The Cytoplasmic segment spans residues 2–489 (SGKCDVVVVG…TFLERHLPSV (488 aa)). Lys52 is subject to N6-acetyllysine. Position 397 is an S-8alpha-FAD cysteine (Cys397). A helical; Anchor for type IV membrane protein membrane pass occupies residues 490 to 516 (PGLLRLIGLTAIFSATALGVLAHKRGL). At 517 to 520 (LVRV) the chain is on the mitochondrial intermembrane side.

Belongs to the flavin monoamine oxidase family. Monomer, homo- or heterodimer (containing two subunits of similar size). Each subunit contains a covalently bound flavin. Enzymatically active as monomer. It depends on FAD as a cofactor.

The protein resides in the mitochondrion outer membrane. The enzyme catalyses a secondary aliphatic amine + O2 + H2O = a primary amine + an aldehyde + H2O2. It catalyses the reaction (R)-adrenaline + O2 + H2O = (R)-3,4-dihydroxymandelaldehyde + methylamine + H2O2. The catalysed reaction is a primary methyl amine + O2 + H2O = an aldehyde + H2O2 + NH4(+). It carries out the reaction benzylamine + O2 + H2O = benzaldehyde + H2O2 + NH4(+). The enzyme catalyses dopamine + O2 + H2O = 3,4-dihydroxyphenylacetaldehyde + H2O2 + NH4(+). It catalyses the reaction tyramine + O2 + H2O = (4-hydroxyphenyl)acetaldehyde + H2O2 + NH4(+). The catalysed reaction is (R)-noradrenaline + O2 + H2O = (R)-3,4-dihydroxymandelaldehyde + H2O2 + NH4(+). It carries out the reaction 2-phenylethylamine + O2 + H2O = 2-phenylacetaldehyde + H2O2 + NH4(+). The enzyme catalyses N-acetylputrescine + O2 + H2O = 4-acetamidobutanal + H2O2 + NH4(+). In terms of biological role, catalyzes the oxidative deamination of primary and some secondary amines such as neurotransmitters, and exogenous amines including the tertiary amine, neurotoxin 1-methyl-4-phenyl-1,2,3,6-tetrahydropyridine (MPTP), with concomitant reduction of oxygen to hydrogen peroxide and participates in the metabolism of neuroactive and vasoactive amines in the central nervous system and peripheral tissues. Preferentially degrades benzylamine and phenylethylamine. This is Amine oxidase [flavin-containing] B from Canis lupus familiaris (Dog).